The chain runs to 166 residues: Large ribosomal subunit protein bL9 (166 aa).

The protein belongs to the bacterial ribosomal protein bL9 family.

In terms of biological role, binds to the 23S rRNA. The polypeptide is Large ribosomal subunit protein bL9 (Psychrobacter arcticus (strain DSM 17307 / VKM B-2377 / 273-4)).